The primary structure comprises 286 residues: Homoserine kinase (286 aa).

ATP is bound at residue 78 to 88; it reads PLARGLGSSSS.

This sequence belongs to the GHMP kinase family. Homoserine kinase subfamily.

Its subcellular location is the cytoplasm. It catalyses the reaction L-homoserine + ATP = O-phospho-L-homoserine + ADP + H(+). It functions in the pathway amino-acid biosynthesis; L-threonine biosynthesis; L-threonine from L-aspartate: step 4/5. In terms of biological role, catalyzes the ATP-dependent phosphorylation of L-homoserine to L-homoserine phosphate. This chain is Homoserine kinase, found in Streptococcus equi subsp. equi (strain 4047).